A 601-amino-acid chain; its full sequence is Glutathione-regulated potassium-efflux system protein KefB (601 aa).

13 helical membrane passes run 5–25 (DLLLAGILFLFAAVVAVPIAA), 29–49 (IGAVLGYLLAGIAIGPWGLGF), 55–75 (EILHFSELGVVFLMFLIGLEL), 87–107 (IFGIGAAQVLLSAVVLAGLLM), 115–135 (AAVVGGIGLAMSSTAMALQLM), 152–172 (VLLFQDLAVIPALAMVPLLAG), 181–201 (LKIGMKVLAFAVMLVGGRYLL), 207–227 (FIAGSGVREVFTAAALLLVLG), 230–250 (LFMDLLGLSMALGTFIAGILL), 268–288 (GLLLGLFFISVGMALNLGVLY), 291–311 (ILWVVMSVVVLVSVKMAVLYG), 324–344 (LPFAGVLSQGGEFAFVLFSSA), and 356–376 (ALLLVTVTLSMMTTPLVMKGI). The RCK N-terminal domain maps to 400 to 519 (KPQVIIVGFG…AGVKQFSRET (120 aa)).

Belongs to the monovalent cation:proton antiporter 2 (CPA2) transporter (TC 2.A.37) family. KefB subfamily. Interacts with the regulatory subunit KefG.

It is found in the cell inner membrane. In terms of biological role, pore-forming subunit of a potassium efflux system that confers protection against electrophiles. Catalyzes K(+)/H(+) antiport. This is Glutathione-regulated potassium-efflux system protein KefB from Cronobacter sakazakii (strain ATCC BAA-894) (Enterobacter sakazakii).